A 96-amino-acid chain; its full sequence is UPF0235 protein YpsIP31758_0827 (96 aa).

Belongs to the UPF0235 family.

This chain is UPF0235 protein YpsIP31758_0827, found in Yersinia pseudotuberculosis serotype O:1b (strain IP 31758).